We begin with the raw amino-acid sequence, 306 residues long: MEKALVLRFLAGVYYIKDLETQIILEAKKRGKLKTPDIKTTQKENSSASDFIIKVGDIVFYELSCDTYLIQSILPRKNELKRPNVANIDQVLLVFSLVKPNFQFLLLDKFLLILEQQKLDVVLVFSKIDLLEPENLTTMQQQLSYYQKFQPFYYINSKQKIGIDALKHIFANQITVLAGQTGVGKSTLLKALIPDAKLKTQEISESLGRGKHTTKNAQLYEFNGGFIVDTPGFSKLDLTTFCPRTLKNFYPDFVEHVCDCFFGESCLHLQEEKCGVKKSLENGKILPSRYQNYVSFYEEIKNQLKY.

The region spanning 77–236 (KNELKRPNVA…IVDTPGFSKL (160 aa)) is the CP-type G domain. GTP-binding positions include 126–129 (SKID) and 179–187 (GQTGVGKST). Cys260, Cys266, His268, and Cys274 together coordinate Zn(2+).

The protein belongs to the TRAFAC class YlqF/YawG GTPase family. RsgA subfamily. Monomer. Associates with 30S ribosomal subunit, binds 16S rRNA. It depends on Zn(2+) as a cofactor.

It localises to the cytoplasm. Its function is as follows. One of several proteins that assist in the late maturation steps of the functional core of the 30S ribosomal subunit. Helps release RbfA from mature subunits. May play a role in the assembly of ribosomal proteins into the subunit. Circularly permuted GTPase that catalyzes slow GTP hydrolysis, GTPase activity is stimulated by the 30S ribosomal subunit. The sequence is that of Small ribosomal subunit biogenesis GTPase RsgA from Onion yellows phytoplasma (strain OY-M).